The chain runs to 152 residues: Small ribosomal subunit protein uS17A (152 aa).

Belongs to the universal ribosomal protein uS17 family. Component of the small ribosomal subunit (SSU). Mature yeast ribosomes consist of a small (40S) and a large (60S) subunit. The 40S small subunit contains 1 molecule of ribosomal RNA (18S rRNA) and at least 33 different proteins. The large 60S subunit contains 3 rRNA molecules (25S, 5.8S and 5S rRNA) and at least 46 different proteins.

Its subcellular location is the cytoplasm. It is found in the nucleus. Component of the ribosome, a large ribonucleoprotein complex responsible for the synthesis of proteins in the cell. The small ribosomal subunit (SSU) binds messenger RNAs (mRNAs) and translates the encoded message by selecting cognate aminoacyl-transfer RNA (tRNA) molecules. The large subunit (LSU) contains the ribosomal catalytic site termed the peptidyl transferase center (PTC), which catalyzes the formation of peptide bonds, thereby polymerizing the amino acids delivered by tRNAs into a polypeptide chain. The nascent polypeptides leave the ribosome through a tunnel in the LSU and interact with protein factors that function in enzymatic processing, targeting, and the membrane insertion of nascent chains at the exit of the ribosomal tunnel. This Schizosaccharomyces pombe (strain 972 / ATCC 24843) (Fission yeast) protein is Small ribosomal subunit protein uS17A (rps1101).